A 453-amino-acid polypeptide reads, in one-letter code: NADH-quinone oxidoreductase subunit D (453 aa).

The span at 1–21 (MKDTETRPGRHRAPEPAHPEQ) shows a compositional bias: basic and acidic residues. Residues 1 to 30 (MKDTETRPGRHRAPEPAHPEQPDTTGDTVV) are disordered.

This sequence belongs to the complex I 49 kDa subunit family. As to quaternary structure, NDH-1 is composed of 14 different subunits. Subunits NuoB, C, D, E, F, and G constitute the peripheral sector of the complex.

It localises to the cell membrane. It catalyses the reaction a quinone + NADH + 5 H(+)(in) = a quinol + NAD(+) + 4 H(+)(out). In terms of biological role, NDH-1 shuttles electrons from NADH, via FMN and iron-sulfur (Fe-S) centers, to quinones in the respiratory chain. The immediate electron acceptor for the enzyme in this species is believed to be a menaquinone. Couples the redox reaction to proton translocation (for every two electrons transferred, four hydrogen ions are translocated across the cytoplasmic membrane), and thus conserves the redox energy in a proton gradient. The protein is NADH-quinone oxidoreductase subunit D of Nocardia farcinica (strain IFM 10152).